Reading from the N-terminus, the 981-residue chain is MAGSSRIGFMAIAVAFHLVYILSIFDIYFVSPIVTGMKLFGVERPHESPKAPADRLVLFVGDGLRADKAFQAHPEPYPESDQDLVPRHLAPYLRSRVLEHGTFGVSHTRVPTESRPGHVALIAGLYEDVSAVATGWKMNPVNFDSVFNRSRHTWSWGSPDILPMFQHGAVPGRVDAFAYGAELEDFSKDATELDYWVFDHVKDFFAAAATNETLNTALREDKVVFFLHLLGLDTTGHSYRPYSKEYLHNIKVVDQGVKEIVELIERFYGDDRTAFVFTADHGMSDWGSHGDGHPNNTRTPLISWGSGVAAPELHPGSIAPGHDELSSDWNLDHVRRHDVAQADVAALMSYLIGTEFPANGVGQLPLNFLSASIKEKAEASLANAQVILEQYRVKEENKRNVELRYQPYGQLSDGNLDPESRISHIRSLIEAGSFEEAIEESDALMSIGLQGLRYLQTYDWLFLRALITIGYLGWMAYATTTVLSLYVVKESMSPQRTLLGSAFFLSLLVALYSSFIISKSPPAYYLYAFFPVLFWEEVYARRANVAKGFQALFGHVKSGGAVVALVFNVVLYLGVIQSLALAYIHREILTGLFVLGAFWPMTQGISFLRSHLFLSMLWFFSCLAMSTFTLLPAMKVEDIPLIMAGGGLMTFVGLAYLVLEDFILSDVSSSKTKLKRLHTSRTLLGIQVGLIILAMLVTHSSATSLQAKLGLPKGNQIVGWFVLVTSLLMPLAYRLQPNSHYMHRLAIIFLTCAPTFVILTISYEGLFYVAFSITLLSWVRLEYAVDAFTQEKAKKQATVAGSQQHTPSTFRPLSLSDARIALFFMVLLQSAFFSTGNIASISSFSLESVSRLIPVFDPFSQGALLILKIIIPFFLISANLGVLNKRLGVAPSAIFMVVLTASDVLTLYFFWVVKDEGSWLEIGSTITHFAIASFLCVFVAALEFVSAAFIAGIEVEDTKSAALTSASTKADEKVPPVAGAE.

At 1-6 the chain is on the cytoplasmic side; it reads MAGSSR. A helical transmembrane segment spans residues 7–27; that stretch reads IGFMAIAVAFHLVYILSIFDI. The Lumenal portion of the chain corresponds to 28–464; it reads YFVSPIVTGM…LQTYDWLFLR (437 aa). N-linked (GlcNAc...) asparagine glycosylation is found at N148, N211, and N295. The chain crosses the membrane as a helical span at residues 465 to 485; sequence ALITIGYLGWMAYATTTVLSL. Over 486–496 the chain is Cytoplasmic; it reads YVVKESMSPQR. Residues 497–517 traverse the membrane as a helical segment; that stretch reads TLLGSAFFLSLLVALYSSFII. Over 518–519 the chain is Lumenal; the sequence is SK. Residues 520-540 traverse the membrane as a helical segment; that stretch reads SPPAYYLYAFFPVLFWEEVYA. The Cytoplasmic portion of the chain corresponds to 541 to 560; sequence RRANVAKGFQALFGHVKSGG. Residues 561–581 traverse the membrane as a helical segment; sequence AVVALVFNVVLYLGVIQSLAL. The Lumenal portion of the chain corresponds to 582–587; sequence AYIHRE. A helical membrane pass occupies residues 588-608; that stretch reads ILTGLFVLGAFWPMTQGISFL. Residues 609–611 lie on the Cytoplasmic side of the membrane; sequence RSH. Residues 612 to 632 traverse the membrane as a helical segment; the sequence is LFLSMLWFFSCLAMSTFTLLP. The Lumenal portion of the chain corresponds to 633–638; that stretch reads AMKVED. Residues 639 to 659 traverse the membrane as a helical segment; sequence IPLIMAGGGLMTFVGLAYLVL. The Cytoplasmic segment spans residues 660-681; the sequence is EDFILSDVSSSKTKLKRLHTSR. Residues 682 to 702 traverse the membrane as a helical segment; that stretch reads TLLGIQVGLIILAMLVTHSSA. Over 703-708 the chain is Lumenal; it reads TSLQAK. A helical transmembrane segment spans residues 709-729; it reads LGLPKGNQIVGWFVLVTSLLM. Residues 730–744 lie on the Cytoplasmic side of the membrane; the sequence is PLAYRLQPNSHYMHR. The chain crosses the membrane as a helical span at residues 745–767; sequence LAIIFLTCAPTFVILTISYEGLF. Residues 768 to 819 are Lumenal-facing; it reads YVAFSITLLSWVRLEYAVDAFTQEKAKKQATVAGSQQHTPSTFRPLSLSDAR. A helical membrane pass occupies residues 820–840; it reads IALFFMVLLQSAFFSTGNIAS. Topologically, residues 841–862 are cytoplasmic; sequence ISSFSLESVSRLIPVFDPFSQG. The helical transmembrane segment at 863–883 threads the bilayer; sequence ALLILKIIIPFFLISANLGVL. The Lumenal portion of the chain corresponds to 884–892; sequence NKRLGVAPS. The chain crosses the membrane as a helical span at residues 893 to 913; the sequence is AIFMVVLTASDVLTLYFFWVV. Over 914–929 the chain is Cytoplasmic; the sequence is KDEGSWLEIGSTITHF. A helical membrane pass occupies residues 930-950; that stretch reads AIASFLCVFVAALEFVSAAFI. Topologically, residues 951-981 are lumenal; the sequence is AGIEVEDTKSAALTSASTKADEKVPPVAGAE.

The protein belongs to the PIGG/PIGN/PIGO family. PIGN subfamily.

Its subcellular location is the endoplasmic reticulum membrane. It participates in glycolipid biosynthesis; glycosylphosphatidylinositol-anchor biosynthesis. Ethanolamine phosphate transferase involved in glycosylphosphatidylinositol-anchor biosynthesis. Transfers ethanolamine phosphate to the first alpha-1,4-linked mannose of the glycosylphosphatidylinositol precursor of GPI-anchor. In Gibberella zeae (strain ATCC MYA-4620 / CBS 123657 / FGSC 9075 / NRRL 31084 / PH-1) (Wheat head blight fungus), this protein is GPI ethanolamine phosphate transferase 1 (MCD4).